The sequence spans 396 residues: Ribosomal RNA large subunit methyltransferase I (396 aa).

The PUA domain maps to 2–79 (SIRIKLKPGR…KEEAIDRDFF (78 aa)).

This sequence belongs to the methyltransferase superfamily. RlmI family.

It is found in the cytoplasm. The enzyme catalyses cytidine(1962) in 23S rRNA + S-adenosyl-L-methionine = 5-methylcytidine(1962) in 23S rRNA + S-adenosyl-L-homocysteine + H(+). Specifically methylates the cytosine at position 1962 (m5C1962) of 23S rRNA. This Shewanella amazonensis (strain ATCC BAA-1098 / SB2B) protein is Ribosomal RNA large subunit methyltransferase I.